Here is a 929-residue protein sequence, read N- to C-terminus: Ras guanine nucleotide exchange factor M (929 aa).

A compositionally biased stretch (polar residues) spans 1-15 (MWQKPSLTKSMMNEV). 2 disordered regions span residues 1–102 (MWQK…AAGS) and 169–316 (TNNN…SKSL). Residues 16–33 (SSNSPKSPTLTSSPSTQS) are compositionally biased toward low complexity. The segment covering 44 to 67 (LDGGGGGSNRLIFGGSGGGSGGGS) has biased composition (gly residues). Low complexity-rich tracts occupy residues 68–80 (LPSSPVSSPVNPF) and 169–191 (TNNNTTTTTNTNNSNNNNSNNDG). The segment covering 192–202 (SGSGSGAGGSF) has biased composition (gly residues). The segment covering 203-246 (IGTTTSAKTTSTTSTSAATTTTTTTTSSSSSSPSSSSPSSTSPT) has biased composition (low complexity). Polar residues predominate over residues 247-256 (IASNNDNNNK). Residues 270–287 (PPLTLSQSQTQQQQQQKV) are compositionally biased toward low complexity. Over residues 295–305 (RFSTNSSGSQS) the composition is skewed to polar residues. The region spanning 390-528 (NKFVVVSGPK…PILDLYEKLK (139 aa)) is the N-terminal Ras-GEF domain. Positions 540 to 583 (SLSGSGGISNNNNGSDLKNSNNGNNSSNNNNSSSNSSSSSSSSD) are disordered. The Ras-GEF domain maps to 676–911 (SPQDIAKQLT…YAFSKFIESP (236 aa)).

Functionally, promotes the exchange of Ras-bound GDP by GTP. The polypeptide is Ras guanine nucleotide exchange factor M (gefM) (Dictyostelium discoideum (Social amoeba)).